Here is a 101-residue protein sequence, read N- to C-terminus: Trp operon repressor homolog (101 aa).

The DNA-binding element occupies 59-82; it reads QREIQQNLNTSAATITRGSNMIKT.

Belongs to the TrpR family. As to quaternary structure, homodimer.

It is found in the cytoplasm. In terms of biological role, this protein is an aporepressor. When complexed with L-tryptophan it binds the operator region of the trp operon and prevents the initiation of transcription. This is Trp operon repressor homolog from Haemophilus influenzae (strain 86-028NP).